The chain runs to 215 residues: Probable phosphoglycerate mutase GpmB (215 aa).

Substrate-binding positions include 8–15, 21–22, Arg-58, Lys-60, 82–85, 104–105, and 151–152; these read RHGETQWN, QG, ELDM, RR, and GI. Residue His-9 is the Tele-phosphohistidine intermediate of the active site. The active-site Proton donor/acceptor is Glu-82.

This sequence belongs to the phosphoglycerate mutase family. GpmB subfamily.

The catalysed reaction is (2R)-2-phosphoglycerate = (2R)-3-phosphoglycerate. The protein operates within carbohydrate degradation; glycolysis; pyruvate from D-glyceraldehyde 3-phosphate: step 3/5. This is Probable phosphoglycerate mutase GpmB from Salmonella choleraesuis (strain SC-B67).